We begin with the raw amino-acid sequence, 48 residues long: uncharacterized protein (48 aa).

Residues 21–43 (SIFVSLGVFAVSVAILKSRLGNF) form a helical membrane-spanning segment.

The protein resides in the membrane. This is an uncharacterized protein from Schizosaccharomyces pombe (strain 972 / ATCC 24843) (Fission yeast).